The sequence spans 2873 residues: WD repeat-containing protein 87 (2873 aa).

WD repeat units follow at residues 108–146 (PCRFNISCLCYDPEMKMLLSGILGAVVTWVIELGGTGLQ), 199–239 (TSSG…PLHS), 242–283 (AHQS…RRLE), 368–407 (SILDQAVDWAYDPGKEELFVATGSSEVLVFDTTRCPCPAK), 415–460 (NSQD…RLEK), 516–553 (LSSCHLTHLILLPKSVGAITETNCLRLWKFHDFLSSGS), and 565–604 (LHLCAITSFDVCLSLSLFVTGSADGSVRIWDFHGRLIGIL). Disordered stretches follow at residues 1049–1124 (FSLD…ESGT), 1177–1199 (DKRDKKATAQKLKKKHKKKGKEA), 1392–1413 (EKKTFQKSPKQGRKAVQKERKV), 1531–1607 (SKSK…QEER), and 2199–2338 (KRKE…EEVD). Composition is skewed to basic residues over residues 1089-1101 (VKKHSQKWLRGLK) and 1187-1197 (KLKKKHKKKGK). The segment covering 1549–1574 (EVSREGEEKEQQVTEEQRHIQEEHKW) has biased composition (basic and acidic residues). A compositionally biased stretch (basic residues) spans 1575 to 1586 (ARIHRKRARAEK). Composition is skewed to basic and acidic residues over residues 1587–1607 (KRAQEERKLAQEEEKLAQEER) and 2204–2213 (KRGDKPKEKF). Residues 2244 to 2276 (SSEEEEEREEEEEREEEEEREEEEERKEEEEGE) show a composition bias toward acidic residues. Residues 2277 to 2287 (EKQVEKEEEEK) show a composition bias toward basic and acidic residues. Over residues 2304-2337 (EVFEEKEEIMSEEETESLSDEEEEEESCSLEEEV) the composition is skewed to acidic residues.

This Homo sapiens (Human) protein is WD repeat-containing protein 87 (WDR87).